Reading from the N-terminus, the 947-residue chain is Bifunctional glutamine synthetase adenylyltransferase/adenylyl-removing enzyme (947 aa).

The adenylyl removase stretch occupies residues Met-1–Glu-443. An adenylyl transferase region spans residues Ala-451–Ala-947.

This sequence belongs to the GlnE family. Mg(2+) is required as a cofactor.

It carries out the reaction [glutamine synthetase]-O(4)-(5'-adenylyl)-L-tyrosine + phosphate = [glutamine synthetase]-L-tyrosine + ADP. It catalyses the reaction [glutamine synthetase]-L-tyrosine + ATP = [glutamine synthetase]-O(4)-(5'-adenylyl)-L-tyrosine + diphosphate. Involved in the regulation of glutamine synthetase GlnA, a key enzyme in the process to assimilate ammonia. When cellular nitrogen levels are high, the C-terminal adenylyl transferase (AT) inactivates GlnA by covalent transfer of an adenylyl group from ATP to specific tyrosine residue of GlnA, thus reducing its activity. Conversely, when nitrogen levels are low, the N-terminal adenylyl removase (AR) activates GlnA by removing the adenylyl group by phosphorolysis, increasing its activity. The regulatory region of GlnE binds the signal transduction protein PII (GlnB) which indicates the nitrogen status of the cell. This chain is Bifunctional glutamine synthetase adenylyltransferase/adenylyl-removing enzyme, found in Vibrio parahaemolyticus serotype O3:K6 (strain RIMD 2210633).